A 158-amino-acid chain; its full sequence is 2-amino-4-hydroxy-6-hydroxymethyldihydropteridine pyrophosphokinase (158 aa).

Belongs to the HPPK family.

It catalyses the reaction 6-hydroxymethyl-7,8-dihydropterin + ATP = (7,8-dihydropterin-6-yl)methyl diphosphate + AMP + H(+). It functions in the pathway cofactor biosynthesis; tetrahydrofolate biosynthesis; 2-amino-4-hydroxy-6-hydroxymethyl-7,8-dihydropteridine diphosphate from 7,8-dihydroneopterin triphosphate: step 4/4. Its function is as follows. Catalyzes the transfer of pyrophosphate from adenosine triphosphate (ATP) to 6-hydroxymethyl-7,8-dihydropterin, an enzymatic step in folate biosynthesis pathway. This Methylorubrum extorquens (strain ATCC 14718 / DSM 1338 / JCM 2805 / NCIMB 9133 / AM1) (Methylobacterium extorquens) protein is 2-amino-4-hydroxy-6-hydroxymethyldihydropteridine pyrophosphokinase (folK).